We begin with the raw amino-acid sequence, 859 residues long: Homeobox-leucine zipper protein HOX32 (859 aa).

The disordered stretch occupies residues 7–31; the sequence is AAVHGVGRQDRSSPGGGGAPQVDTG. The homeobox DNA-binding region spans 29-92; that stretch reads DTGKYVRYTP…NRRCREKQRK (64 aa). Residues 100 to 129 adopt a coiled-coil conformation; that stretch reads VNRKLTAMNKLLMEENDRLQKQVSRLVYEN. Residues 146–164 are compositionally biased toward polar residues; it reads TSCESVVTSGQHHQQQNPA. The interval 146–172 is disordered; that stretch reads TSCESVVTSGQHHQQQNPAATRPQRDA. The START domain occupies 171–393; the sequence is DANNPAGLLA…LRHIRQIAHE (223 aa).

The protein belongs to the HD-ZIP homeobox family. Class III subfamily. Expressed in seedlings, roots, stems, leaf sheaths and blades and panicles.

The protein localises to the nucleus. Its function is as follows. Probable transcription factor. This is Homeobox-leucine zipper protein HOX32 (HOX32) from Oryza sativa subsp. indica (Rice).